Here is a 620-residue protein sequence, read N- to C-terminus: Sterile alpha motif domain-containing protein 15 (620 aa).

The disordered stretch occupies residues 1–394 (MSEVSGDYNS…PNYPAGKDKL (394 aa)). 3 stretches are compositionally biased toward basic and acidic residues: residues 62 to 83 (TRTR…DLQR), 106 to 125 (IDPE…KSVE), and 135 to 180 (TKSE…HFKS). Polar residues predominate over residues 181-191 (TEQSGTEQPEQ). Residues 233–242 (RPLKASKKAQ) show a composition bias toward basic residues. Residues 261-270 (LLDDQEETQE) show a composition bias toward acidic residues. Basic and acidic residues-rich tracts occupy residues 271 to 286 (ESIK…DRKP), 295 to 315 (KSSE…DKDP), 323 to 337 (FPKE…KTGD), and 347 to 382 (IQEK…KPES). The SAM domain occupies 480-543 (WSPERVAEWI…SYHTRVLLGI (64 aa)). Over residues 594–604 (EIKAEEKKEDA) the composition is skewed to basic and acidic residues. The tract at residues 594–620 (EIKAEEKKEDALPENSLEENEELYEAT) is disordered. The segment covering 609-620 (SLEENEELYEAT) has biased composition (acidic residues).

The protein is Sterile alpha motif domain-containing protein 15 (Samd15) of Mus musculus (Mouse).